Here is an 88-residue protein sequence, read N- to C-terminus: Small ribosomal subunit protein bS20 (88 aa).

Residues 1-27 form a disordered region; it reads MANSKSAKKRALQSEKRRQHNASRRSM.

This sequence belongs to the bacterial ribosomal protein bS20 family.

In terms of biological role, binds directly to 16S ribosomal RNA. The protein is Small ribosomal subunit protein bS20 of Shewanella sp. (strain ANA-3).